We begin with the raw amino-acid sequence, 172 residues long: 3-hydroxydecanoyl-[acyl-carrier-protein] dehydratase (172 aa).

His-71 is an active-site residue.

This sequence belongs to the thioester dehydratase family. FabA subfamily. As to quaternary structure, homodimer.

It localises to the cytoplasm. The catalysed reaction is a (3R)-hydroxyacyl-[ACP] = a (2E)-enoyl-[ACP] + H2O. It carries out the reaction (3R)-hydroxydecanoyl-[ACP] = (2E)-decenoyl-[ACP] + H2O. The enzyme catalyses (2E)-decenoyl-[ACP] = (3Z)-decenoyl-[ACP]. It participates in lipid metabolism; fatty acid biosynthesis. Necessary for the introduction of cis unsaturation into fatty acids. Catalyzes the dehydration of (3R)-3-hydroxydecanoyl-ACP to E-(2)-decenoyl-ACP and then its isomerization to Z-(3)-decenoyl-ACP. Can catalyze the dehydratase reaction for beta-hydroxyacyl-ACPs with saturated chain lengths up to 16:0, being most active on intermediate chain length. The sequence is that of 3-hydroxydecanoyl-[acyl-carrier-protein] dehydratase from Erwinia tasmaniensis (strain DSM 17950 / CFBP 7177 / CIP 109463 / NCPPB 4357 / Et1/99).